Here is a 399-residue protein sequence, read N- to C-terminus: Tryptophan synthase beta chain (399 aa).

N6-(pyridoxal phosphate)lysine is present on lysine 92.

This sequence belongs to the TrpB family. Tetramer of two alpha and two beta chains. It depends on pyridoxal 5'-phosphate as a cofactor.

The enzyme catalyses (1S,2R)-1-C-(indol-3-yl)glycerol 3-phosphate + L-serine = D-glyceraldehyde 3-phosphate + L-tryptophan + H2O. Its pathway is amino-acid biosynthesis; L-tryptophan biosynthesis; L-tryptophan from chorismate: step 5/5. Functionally, the beta subunit is responsible for the synthesis of L-tryptophan from indole and L-serine. The sequence is that of Tryptophan synthase beta chain from Legionella pneumophila subsp. pneumophila (strain Philadelphia 1 / ATCC 33152 / DSM 7513).